The primary structure comprises 404 residues: Cystinosin homolog (404 aa).

Topologically, residues 20 to 123 (TNNLVVRQKE…FARITVIRSH (104 aa)) are lumenal. N46, N53, N79, and N97 each carry an N-linked (GlcNAc...) asparagine glycan. The chain crosses the membrane as a helical span at residues 124-144 (FLAILIQIVGWTYFFAWSISF). The PQ-loop 1 domain maps to 125 to 191 (LAILIQIVGW…MYYNSHVKNE (67 aa)). Residues 145–163 (YPQMYLNFKRKSVVGLNFD) are Cytoplasmic-facing. The chain crosses the membrane as a helical span at residues 164 to 184 (FLSLNLVGFCAYAIFNLLMYY). Residues 185 to 207 (NSHVKNEYNIVNPRSPPPVLLND) lie on the Lumenal side of the membrane. The helical transmembrane segment at 208–228 (VVFAVHAFLACFITILQCLFY) threads the bilayer. Topologically, residues 229–238 (ERDNQSVSSK) are cytoplasmic. The helical transmembrane segment at 239–259 (CIALMIVLISFGFCSAAATVL) threads the bilayer. Residues 260–263 (RKIQ) are Lumenal-facing. A helical membrane pass occupies residues 264-285 (LLSFVTSLSYIKMAVTCCKYFP). In terms of domain architecture, PQ-loop 2 spans 266-327 (SFVTSLSYIK…MILQAVNVND (62 aa)). The Cytoplasmic portion of the chain corresponds to 286 to 295 (QAYFNYTRKS). A helical membrane pass occupies residues 296-316 (TVGWSIGNIMLDFTGGTLDIL). Over 317–337 (QMILQAVNVNDWSAFYANPVK) the chain is Lumenal. A helical membrane pass occupies residues 338–358 (FGLGFVSIFFDIIFMVQHYVL). The Cytoplasmic portion of the chain corresponds to 359 to 404 (YPNAEVPHNEYHGVDNPNPDNIARDAEQYAGDSESMESTEPIIVHD).

The protein belongs to the cystinosin family.

It is found in the lysosome membrane. The protein localises to the cytoplasmic vesicle. The protein resides in the phagosome. It carries out the reaction L-cystine(out) + H(+)(out) = L-cystine(in) + H(+)(in). In terms of biological role, cystine/H(+) symporter that mediates export of cystine, the oxidized dimer of cysteine, from lysosomes. May play a role in the degradation of engulfed apoptotic cells. In Caenorhabditis elegans, this protein is Cystinosin homolog (ctns-1).